Reading from the N-terminus, the 229-residue chain is Clathrin light chain (229 aa).

2 disordered regions span residues 1-24 and 76-132; these read MSQF…DSKN and EMQA…KLRE. The segment covering 107 to 132 has biased composition (basic and acidic residues); it reads EPVRKWKEDQMKRIQERDESSKKLRE. Ser-229 is modified (phosphoserine).

It belongs to the clathrin light chain family. Clathrin coats are formed from molecules containing 3 heavy chains and 3 light chains.

The protein localises to the cytoplasmic vesicle membrane. Its subcellular location is the membrane. It is found in the coated pit. Functionally, clathrin is the major protein of the polyhedral coat of coated pits and vesicles. This is Clathrin light chain (clc1) from Schizosaccharomyces pombe (strain 972 / ATCC 24843) (Fission yeast).